A 123-amino-acid polypeptide reads, in one-letter code: NADH-quinone oxidoreductase subunit A (123 aa).

The next 3 membrane-spanning stretches (helical) occupy residues 11-31 (YLPI…IMIL), 68-88 (LVAI…PWAI), and 93-113 (IGKM…IGFI).

This sequence belongs to the complex I subunit 3 family. As to quaternary structure, NDH-1 is composed of 14 different subunits. Subunits NuoA, H, J, K, L, M, N constitute the membrane sector of the complex.

The protein resides in the cell inner membrane. It carries out the reaction a quinone + NADH + 5 H(+)(in) = a quinol + NAD(+) + 4 H(+)(out). NDH-1 shuttles electrons from NADH, via FMN and iron-sulfur (Fe-S) centers, to quinones in the respiratory chain. The immediate electron acceptor for the enzyme in this species is believed to be ubiquinone. Couples the redox reaction to proton translocation (for every two electrons transferred, four hydrogen ions are translocated across the cytoplasmic membrane), and thus conserves the redox energy in a proton gradient. The protein is NADH-quinone oxidoreductase subunit A of Rickettsia prowazekii (strain Madrid E).